Here is a 182-residue protein sequence, read N- to C-terminus: Large ribosomal subunit protein uL5 (182 aa).

It belongs to the universal ribosomal protein uL5 family. As to quaternary structure, part of the 50S ribosomal subunit; part of the 5S rRNA/L5/L18/L25 subcomplex. Contacts the 5S rRNA and the P site tRNA. Forms a bridge to the 30S subunit in the 70S ribosome.

Its function is as follows. This is one of the proteins that bind and probably mediate the attachment of the 5S RNA into the large ribosomal subunit, where it forms part of the central protuberance. In the 70S ribosome it contacts protein S13 of the 30S subunit (bridge B1b), connecting the 2 subunits; this bridge is implicated in subunit movement. Contacts the P site tRNA; the 5S rRNA and some of its associated proteins might help stabilize positioning of ribosome-bound tRNAs. The chain is Large ribosomal subunit protein uL5 from Borrelia duttonii (strain Ly).